The chain runs to 302 residues: Probable 2-(5''-triphosphoribosyl)-3'-dephosphocoenzyme-A synthase (302 aa).

The protein belongs to the CitG/MdcB family.

It catalyses the reaction 3'-dephospho-CoA + ATP = 2'-(5''-triphospho-alpha-D-ribosyl)-3'-dephospho-CoA + adenine. The protein is Probable 2-(5''-triphosphoribosyl)-3'-dephosphocoenzyme-A synthase of Albidiferax ferrireducens (strain ATCC BAA-621 / DSM 15236 / T118) (Rhodoferax ferrireducens).